A 254-amino-acid polypeptide reads, in one-letter code: Isoprenyl transferase (254 aa).

The active site involves Asp23. Asp23 serves as a coordination point for Mg(2+). Substrate-binding positions include 24–27 (GNGR), Trp28, Arg36, His40, and 68–70 (STE). The active-site Proton acceptor is Asn71. Residues Trp72, Arg74, Arg191, and 197-199 (RIS) each bind substrate. Position 210 (Glu210) interacts with Mg(2+).

It belongs to the UPP synthase family. As to quaternary structure, homodimer. The cofactor is Mg(2+).

Its function is as follows. Catalyzes the condensation of isopentenyl diphosphate (IPP) with allylic pyrophosphates generating different type of terpenoids. This is Isoprenyl transferase from Porphyromonas gingivalis (strain ATCC BAA-308 / W83).